Here is a 643-residue protein sequence, read N- to C-terminus: DNA polymerase III subunit tau (643 aa).

45–52 contributes to the ATP binding site; sequence GTRGVGKT. 4 residues coordinate Zn(2+): Cys64, Cys73, Cys76, and Cys79. Positions 385–404 are disordered; sequence TPTQVPPQPQSAPQQAPTVP.

It belongs to the DnaX/STICHEL family. In terms of assembly, the DNA polymerase III holoenzyme complex contains at least 10 different subunits organized into 3 functionally essential subassemblies: the Pol III core, the beta sliding clamp processivity factor and the clamp-loading complex. The Pol III core (subunits alpha, epsilon and theta) contains the polymerase and the 3'-5' exonuclease proofreading activities. The polymerase is tethered to the template via the dimeric beta sliding clamp processivity factor. The clamp-loading complex (also called gamma complex) assembles the beta sliding clamp onto the primed template and plays a central role in the organization and communication at the replication fork. The clamp-loading complex contains delta, delta', psi and chi, and 3 copies of either or both of two different DnaX proteins, gamma and tau. The DNA replisome complex has a single clamp loader (3 tau and 1 each of delta, delta', psi and chi subunits) which binds 3 Pol III cores (1 core on the leading strand and 2 on the lagging strand) each with a beta sliding clamp dimer. Additional proteins in the replisome are other copies of gamma, psi and chi, Ssb, DNA helicase and RNA primase. The clamp loader hydrolyzes ATP to assemble the beta processivity factor onto the primed template and plays a central role in the organization and communication at the replication fork; the minimal complex to load the beta sliding clamp on DNA is delta, delta', gamma.

The catalysed reaction is DNA(n) + a 2'-deoxyribonucleoside 5'-triphosphate = DNA(n+1) + diphosphate. Functionally, part of the beta sliding clamp loading complex, which hydrolyzes ATP to load the beta clamp onto primed DNA to form the DNA replication pre-initiation complex. DNA polymerase III is a complex, multichain enzyme responsible for most of the replicative synthesis in bacteria. This DNA polymerase also exhibits 3'-5' exonuclease activity. The gamma complex (gamma(3),delta,delta') is thought to load beta dimers onto DNA by binding ATP which alters the complex's conformation so it can bind beta sliding clamp dimers and open them at one interface. Primed DNA is recognized, ATP is hydrolyzed releasing the gamma complex and closing the beta sliding clamp ring around the primed DNA. In terms of biological role, serves as a scaffold to trimerize the core complex. Interacts with the delta and delta' subunits to transfer the beta subunit on the DNA. Interacts with ATP, drives ATP-induced conformational changes in the gamma complex that opens the beta sliding clamp ring. After loading of primed DNA ATP is hydrolyzed and the beta sliding clamp ring closes. The sequence is that of DNA polymerase III subunit tau (dnaX) from Escherichia coli (strain K12).